The following is a 431-amino-acid chain: UDP-N-acetylmuramate--L-alanine ligase (431 aa).

Position 108–114 (108–114 (GAHGKST)) interacts with ATP.

Belongs to the MurCDEF family.

It localises to the cytoplasm. It carries out the reaction UDP-N-acetyl-alpha-D-muramate + L-alanine + ATP = UDP-N-acetyl-alpha-D-muramoyl-L-alanine + ADP + phosphate + H(+). It functions in the pathway cell wall biogenesis; peptidoglycan biosynthesis. Functionally, cell wall formation. This chain is UDP-N-acetylmuramate--L-alanine ligase, found in Campylobacter jejuni subsp. jejuni serotype O:6 (strain 81116 / NCTC 11828).